Consider the following 342-residue polypeptide: Inositol-tetrakisphosphate 1-kinase 5 (342 aa).

Positions 25 and 67 each coordinate 1D-myo-inositol 1,3,4-trisphosphate. Positions 102 and 154 each coordinate ATP. The 1D-myo-inositol 1,3,4-trisphosphate site is built by His-165 and Lys-197. Residues 186-197 (QEFVNHGGVIFK) and Ser-212 contribute to the ATP site. Mg(2+) contacts are provided by Asp-283, Asp-298, and Asn-300. Asn-300 lines the 1D-myo-inositol 1,3,4-trisphosphate pocket.

This sequence belongs to the ITPK1 family. As to quaternary structure, monomer. Mg(2+) serves as cofactor. As to expression, expressed in roots, leaves, flowers, anthers and embryos.

The enzyme catalyses 1D-myo-inositol 3,4,5,6-tetrakisphosphate + ATP = 1D-myo-inositol 1,3,4,5,6-pentakisphosphate + ADP + H(+). The catalysed reaction is 1D-myo-inositol 1,3,4-trisphosphate + ATP = 1D-myo-inositol 1,3,4,5-tetrakisphosphate + ADP + H(+). It carries out the reaction 1D-myo-inositol 1,3,4-trisphosphate + ATP = 1D-myo-inositol 1,3,4,6-tetrakisphosphate + ADP + H(+). Kinase that can phosphorylate various inositol polyphosphate such as Ins(3,4,5,6)P4 or Ins(1,3,4)P3 and participates in phytic acid biosynthesis in developing seeds. Phytic acid is the primary storage form of phosphorus in cereal grains and other plant seeds. The chain is Inositol-tetrakisphosphate 1-kinase 5 (ITPK5) from Oryza sativa subsp. japonica (Rice).